The chain runs to 663 residues: Glucans biosynthesis glucosyltransferase H (663 aa).

6 helical membrane-spanning segments follow: residues tryptophan 64–alanine 86, leucine 101–methionine 123, leucine 413–isoleucine 435, alanine 470–leucine 492, glutamate 558–threonine 580, and leucine 584–histidine 606.

This sequence belongs to the glycosyltransferase 2 family. OpgH subfamily.

Its subcellular location is the cell inner membrane. It participates in glycan metabolism; osmoregulated periplasmic glucan (OPG) biosynthesis. In terms of biological role, involved in the biosynthesis of osmoregulated periplasmic glucans (OPGs). The sequence is that of Glucans biosynthesis glucosyltransferase H from Caulobacter vibrioides (strain ATCC 19089 / CIP 103742 / CB 15) (Caulobacter crescentus).